The primary structure comprises 585 residues: ATP-dependent lipid A-core flippase (585 aa).

The next 5 helical transmembrane spans lie at 16-36 (LWPY…ALII), 66-86 (FLSM…ASGF), 156-176 (IIGL…ILLV), 252-272 (AIAN…VLVL), and 278-298 (LRAE…FGLM). The 285-residue stretch at 29-313 (VAVVALIINA…LTNVTSQFQR (285 aa)) folds into the ABC transmembrane type-1 domain. In terms of domain architecture, ABC transporter spans 345 to 581 (IQVKNVTFTY…DGAYAQLHRI (237 aa)). 379-386 (GRSGSGKS) serves as a coordination point for ATP.

The protein belongs to the ABC transporter superfamily. Lipid exporter (TC 3.A.1.106) family. Homodimer.

It localises to the cell inner membrane. The catalysed reaction is ATP + H2O + lipid A-core oligosaccharideSide 1 = ADP + phosphate + lipid A-core oligosaccharideSide 2.. In terms of biological role, involved in lipopolysaccharide (LPS) biosynthesis. Translocates lipid A-core from the inner to the outer leaflet of the inner membrane. Transmembrane domains (TMD) form a pore in the inner membrane and the ATP-binding domain (NBD) is responsible for energy generation. The polypeptide is ATP-dependent lipid A-core flippase (Photobacterium profundum (strain SS9)).